A 369-amino-acid polypeptide reads, in one-letter code: CASP-like protein 4U1 (369 aa).

Positions 1 to 162 (MASTPRTPAP…RAETKLPLSS (162 aa)) are disordered. Residues 1 to 222 (MASTPRTPAP…AVAAVAERRE (222 aa)) lie on the Cytoplasmic side of the membrane. Positions 7-23 (TPAPERSPPPVPTPPPP) are enriched in pro residues. Positions 36 to 51 (SPREEASFSSDGREGA) are enriched in basic and acidic residues. Low complexity-rich tracts occupy residues 87–96 (ANKAAAATAE) and 114–127 (SSQTSPATTNSPTP). A helical membrane pass occupies residues 223–243 (LLLALRLATAVLSLAAFSVIA). At 244-262 (SARTSGWAGDYYARHLQYR) the chain is on the extracellular side. A helical membrane pass occupies residues 263 to 283 (YAVAVNVIVFAYSVAQSLGKI). Residues 284-300 (RHLVSPRFTFRTMSSYY) are Cytoplasmic-facing. The chain crosses the membrane as a helical span at residues 301 to 321 (CSLFLDQVLAYLLMSASSAAA). Residues 322 to 339 (SRNDLWVSRFGTDAFVRK) are Extracellular-facing. The helical transmembrane segment at 340–360 (ITGALWLSFVAFLVLALNAVI) threads the bilayer. The Cytoplasmic portion of the chain corresponds to 361 to 369 (SXANLFSMV).

Belongs to the Casparian strip membrane proteins (CASP) family. Homodimer and heterodimers.

The protein resides in the cell membrane. The sequence is that of CASP-like protein 4U1 from Zea mays (Maize).